The chain runs to 163 residues: Pheromone-binding protein (163 aa).

The N-terminal stretch at 1-22 is a signal peptide; sequence MMSVRLMLVVAVWLCLRVDASQ. Disulfide bonds link Cys-39–Cys-74, Cys-70–Cys-129, and Cys-117–Cys-138.

The protein belongs to the PBP/GOBP family. As to expression, antenna.

In terms of biological role, this major soluble protein in olfactory sensilla of male moths might serve to solubilize the extremely hydrophobic pheromone molecules and to transport pheromone through the aqueous lymph to receptors located on olfactory cilia. The protein is Pheromone-binding protein of Heliothis virescens (Tobacco budworm moth).